A 377-amino-acid polypeptide reads, in one-letter code: UPF0754 membrane protein RBAM_010020 (377 aa).

2 consecutive transmembrane segments (helical) span residues 1–21 (MGIA…GAVT) and 357–377 (YLGG…VILF).

This sequence belongs to the UPF0754 family.

Its subcellular location is the cell membrane. This is UPF0754 membrane protein RBAM_010020 from Bacillus velezensis (strain DSM 23117 / BGSC 10A6 / LMG 26770 / FZB42) (Bacillus amyloliquefaciens subsp. plantarum).